A 490-amino-acid chain; its full sequence is Ribulose bisphosphate carboxylase large chain (490 aa).

Positions 127 and 177 each coordinate substrate. Catalysis depends on K179, which acts as the Proton acceptor. Residue K181 coordinates substrate. Mg(2+) is bound by residues K205, D207, and E208. K205 is subject to N6-carboxylysine. H297 functions as the Proton acceptor in the catalytic mechanism. R298, H330, and S382 together coordinate substrate.

The protein belongs to the RuBisCO large chain family. Type I subfamily. In terms of assembly, heterohexadecamer of 8 large chains and 8 small chains. The cofactor is Mg(2+).

It is found in the plastid. The protein resides in the chloroplast. The catalysed reaction is 2 (2R)-3-phosphoglycerate + 2 H(+) = D-ribulose 1,5-bisphosphate + CO2 + H2O. The enzyme catalyses D-ribulose 1,5-bisphosphate + O2 = 2-phosphoglycolate + (2R)-3-phosphoglycerate + 2 H(+). Its function is as follows. RuBisCO catalyzes two reactions: the carboxylation of D-ribulose 1,5-bisphosphate, the primary event in carbon dioxide fixation, as well as the oxidative fragmentation of the pentose substrate in the photorespiration process. Both reactions occur simultaneously and in competition at the same active site. The sequence is that of Ribulose bisphosphate carboxylase large chain from Thalassiosira pseudonana (Marine diatom).